Reading from the N-terminus, the 271-residue chain is Pyrroline-5-carboxylate reductase (271 aa).

It belongs to the pyrroline-5-carboxylate reductase family.

It localises to the cytoplasm. It carries out the reaction L-proline + NADP(+) = (S)-1-pyrroline-5-carboxylate + NADPH + 2 H(+). It catalyses the reaction L-proline + NAD(+) = (S)-1-pyrroline-5-carboxylate + NADH + 2 H(+). It participates in amino-acid biosynthesis; L-proline biosynthesis; L-proline from L-glutamate 5-semialdehyde: step 1/1. Functionally, catalyzes the reduction of 1-pyrroline-5-carboxylate (PCA) to L-proline. The chain is Pyrroline-5-carboxylate reductase from Haemophilus influenzae (strain ATCC 51907 / DSM 11121 / KW20 / Rd).